A 612-amino-acid chain; its full sequence is Glutamine--fructose-6-phosphate aminotransferase [isomerizing] (612 aa).

Cys-2 (nucleophile; for GATase activity) is an active-site residue. A Glutamine amidotransferase type-2 domain is found at Cys-2–Asp-220. SIS domains follow at residues Ala-288 to Leu-428 and Trp-461 to Pro-602. Residue Lys-607 is the For Fru-6P isomerization activity of the active site.

In terms of assembly, homodimer.

The protein localises to the cytoplasm. The catalysed reaction is D-fructose 6-phosphate + L-glutamine = D-glucosamine 6-phosphate + L-glutamate. Its function is as follows. Catalyzes the first step in hexosamine metabolism, converting fructose-6P into glucosamine-6P using glutamine as a nitrogen source. The chain is Glutamine--fructose-6-phosphate aminotransferase [isomerizing] from Neisseria meningitidis serogroup B (strain ATCC BAA-335 / MC58).